A 325-amino-acid chain; its full sequence is Protein FAM50B (325 aa).

Position 2 is an N-acetylalanine (Ala-2). 2 disordered regions span residues 92-111 (QHLE…EQRR) and 137-160 (RRAG…DREE).

The protein belongs to the FAM50 family. Widely expressed. Mostly abundant in testis and adult and fetal brain.

The chain is Protein FAM50B (FAM50B) from Homo sapiens (Human).